The following is a 173-amino-acid chain: ATP synthase subunit b (173 aa).

A helical transmembrane segment spans residues 12 to 32 (LDVNPGLVVWTLITFLVVVLV).

This sequence belongs to the ATPase B chain family. F-type ATPases have 2 components, F(1) - the catalytic core - and F(0) - the membrane proton channel. F(1) has five subunits: alpha(3), beta(3), gamma(1), delta(1), epsilon(1). F(0) has three main subunits: a(1), b(2) and c(10-14). The alpha and beta chains form an alternating ring which encloses part of the gamma chain. F(1) is attached to F(0) by a central stalk formed by the gamma and epsilon chains, while a peripheral stalk is formed by the delta and b chains.

It is found in the cell inner membrane. Its function is as follows. F(1)F(0) ATP synthase produces ATP from ADP in the presence of a proton or sodium gradient. F-type ATPases consist of two structural domains, F(1) containing the extramembraneous catalytic core and F(0) containing the membrane proton channel, linked together by a central stalk and a peripheral stalk. During catalysis, ATP synthesis in the catalytic domain of F(1) is coupled via a rotary mechanism of the central stalk subunits to proton translocation. In terms of biological role, component of the F(0) channel, it forms part of the peripheral stalk, linking F(1) to F(0). The polypeptide is ATP synthase subunit b (Leptospira borgpetersenii serovar Hardjo-bovis (strain JB197)).